The sequence spans 943 residues: Protein translocase subunit SecA (943 aa).

Residues Gln-77, 95-99 (GEGKT), and Asp-484 each bind ATP.

The protein belongs to the SecA family. Monomer and homodimer. Part of the essential Sec protein translocation apparatus which comprises SecA, SecYEG and auxiliary proteins SecDF. Other proteins may also be involved.

Its subcellular location is the cell membrane. The protein localises to the cytoplasm. The enzyme catalyses ATP + H2O + cellular proteinSide 1 = ADP + phosphate + cellular proteinSide 2.. In terms of biological role, part of the Sec protein translocase complex. Interacts with the SecYEG preprotein conducting channel. Has a central role in coupling the hydrolysis of ATP to the transfer of proteins into and across the cell membrane, serving as an ATP-driven molecular motor driving the stepwise translocation of polypeptide chains across the membrane. The chain is Protein translocase subunit SecA from Mesoplasma florum (strain ATCC 33453 / NBRC 100688 / NCTC 11704 / L1) (Acholeplasma florum).